The primary structure comprises 60 residues: Putative insect toxin Acra6 (60 aa).

One can recognise an LCN-type CS-alpha/beta domain in the interval 2-60 (RDGYIRRKDEFKFKCYVDGKDCDDVCKSEGGSAGYCTALGFLCYCAGLPDDKAWKPTSS). 3 disulfides stabilise this stretch: C16-C37, C23-C44, and C27-C46.

This sequence belongs to the long (4 C-C) scorpion toxin superfamily. Sodium channel inhibitor family. Beta subfamily. Expressed by the venom gland.

The protein resides in the secreted. In terms of biological role, depressant insect toxins cause a transient contraction paralysis followed by a slow flaccid paralysis. They bind voltage-independently to sodium channels (Nav) and block action potentials, primarily by depolarizing the axonal membrane and suppressing the sodium current. In Androctonus crassicauda (Arabian fat-tailed scorpion), this protein is Putative insect toxin Acra6.